Reading from the N-terminus, the 95-residue chain is Beta-alanine degradation protein BauB (95 aa).

Residues 23 to 90 (WRFAPGAETG…NASAHEVVFV (68 aa)) form the Cupin type-2 domain.

Its function is as follows. Involved in the degradation of beta-alanine. The chain is Beta-alanine degradation protein BauB (bauB) from Pseudomonas aeruginosa (strain ATCC 15692 / DSM 22644 / CIP 104116 / JCM 14847 / LMG 12228 / 1C / PRS 101 / PAO1).